The primary structure comprises 881 residues: Disks large homolog 2 (881 aa).

Disordered stretches follow at residues 16-41 (HRQQ…MNPA) and 63-88 (LSTT…SFPR). PDZ domains follow at residues 155-242 (EITL…RRRR), 250-337 (EIKL…GKPT), and 424-505 (KIVL…QYRP). Positions 539–609 (KRSLYVRALF…PSKRRVERKE (71 aa)) constitute an SH3 domain. Residues 683–866 (ARPVIILGPM…IYNQCKMVIE (184 aa)) form the Guanylate kinase-like domain. Residues 709-729 (GSCVPPANSSDQEDTTRPKRD) are disordered.

The protein belongs to the MAGUK family.

The protein localises to the cell membrane. It localises to the postsynaptic density. The protein resides in the synapse. Its subcellular location is the membrane. It is found in the cell projection. The protein localises to the axon. It localises to the perikaryon. Functionally, may play a role in synapse assembly and function. In Danio rerio (Zebrafish), this protein is Disks large homolog 2 (dlg2).